The following is a 269-amino-acid chain: Aminoglycoside N(3)-acetyltransferase III (269 aa).

The protein belongs to the antibiotic N-acetyltransferase family.

It catalyses the reaction a 2-deoxystreptamine antibiotic + acetyl-CoA = an N(3)-acetyl-2-deoxystreptamine antibiotic + CoA + H(+). Resistance to antibiotics containing the 2-deoxy-streptamine ring including gentamicin, kanamycin, tobramycin, neomycin and apramycin. The sequence is that of Aminoglycoside N(3)-acetyltransferase III (aac3-Vb) from Serratia marcescens.